A 139-amino-acid chain; its full sequence is NADH-quinone oxidoreductase subunit A (139 aa).

The next 3 membrane-spanning stretches (helical) occupy residues 11 to 31, 70 to 90, and 97 to 117; these read LWPL…MLAL, LIAI…AWAI, and WPGY…LVYL.

Belongs to the complex I subunit 3 family. NDH-1 is composed of 14 different subunits. Subunits NuoA, H, J, K, L, M, N constitute the membrane sector of the complex.

It localises to the cell inner membrane. It catalyses the reaction a quinone + NADH + 5 H(+)(in) = a quinol + NAD(+) + 4 H(+)(out). NDH-1 shuttles electrons from NADH, via FMN and iron-sulfur (Fe-S) centers, to quinones in the respiratory chain. The immediate electron acceptor for the enzyme in this species is believed to be ubiquinone. Couples the redox reaction to proton translocation (for every two electrons transferred, four hydrogen ions are translocated across the cytoplasmic membrane), and thus conserves the redox energy in a proton gradient. This Methylococcus capsulatus (strain ATCC 33009 / NCIMB 11132 / Bath) protein is NADH-quinone oxidoreductase subunit A.